The primary structure comprises 30 residues: Cliotide T6 (30 aa).

Positions 1-30 form a cross-link, cyclopeptide (Ser-Asn); sequence SIPCGESCVYIPCITTIVGCSCKDKVCYKN. Intrachain disulfides connect Cys4-Cys20, Cys8-Cys22, and Cys13-Cys27.

In terms of processing, contains 3 disulfide bonds. This is a cyclic peptide. As to expression, expressed in pod but not in flower, stem, shoot, leaf, seed, root and nodule (at protein level).

Its function is as follows. Probably participates in a plant defense mechanism. The sequence is that of Cliotide T6 from Clitoria ternatea (Butterfly pea).